The primary structure comprises 332 residues: tRNA-dihydrouridine(20/20a) synthase (332 aa).

FMN contacts are provided by residues 19-21 (PML) and Q71. The Proton donor role is filled by C101. FMN-binding positions include K140, H173, 213–215 (NGG), and 235–236 (GR).

Belongs to the Dus family. DusA subfamily. It depends on FMN as a cofactor.

It catalyses the reaction 5,6-dihydrouridine(20) in tRNA + NADP(+) = uridine(20) in tRNA + NADPH + H(+). It carries out the reaction 5,6-dihydrouridine(20) in tRNA + NAD(+) = uridine(20) in tRNA + NADH + H(+). The enzyme catalyses 5,6-dihydrouridine(20a) in tRNA + NADP(+) = uridine(20a) in tRNA + NADPH + H(+). The catalysed reaction is 5,6-dihydrouridine(20a) in tRNA + NAD(+) = uridine(20a) in tRNA + NADH + H(+). Its function is as follows. Catalyzes the synthesis of 5,6-dihydrouridine (D), a modified base found in the D-loop of most tRNAs, via the reduction of the C5-C6 double bond in target uridines. Specifically modifies U20 and U20a in tRNAs. The sequence is that of tRNA-dihydrouridine(20/20a) synthase from Salmonella typhimurium (strain LT2 / SGSC1412 / ATCC 700720).